The sequence spans 283 residues: Endochitinase At2g43620 (283 aa).

An N-terminal signal peptide occupies residues 1-28; the sequence is MATLRAMLKNAFILFLFTLTIMAKTVFS. Residues 29–66 enclose the Chitin-binding type-1 domain; sequence QQCGTTGCAANLCCSRYGYCGTTDAYCGTGCRSGPCSS. 4 disulfides stabilise this stretch: Cys-31/Cys-42, Cys-36/Cys-48, Cys-41/Cys-55, and Cys-59/Cys-64. The segment at 88–283 is catalytic; that stretch reads DTIENVVTPA…GITPGANLSC (196 aa). The active-site Proton donor is the Glu-150. Asn-280 is a glycosylation site (N-linked (GlcNAc...) asparagine).

Belongs to the glycosyl hydrolase 19 family. Chitinase class I subfamily.

The catalysed reaction is Random endo-hydrolysis of N-acetyl-beta-D-glucosaminide (1-&gt;4)-beta-linkages in chitin and chitodextrins.. This chain is Endochitinase At2g43620, found in Arabidopsis thaliana (Mouse-ear cress).